The following is a 475-amino-acid chain: Homeobox even-skipped homolog protein 2 (475 aa).

2 disordered regions span residues Pro-82–Asp-113 and Thr-155–Asp-189. The segment covering Ser-83–Thr-96 has biased composition (low complexity). Gly residues predominate over residues Ser-160–Ser-186. Positions Val-191–Arg-250 form a DNA-binding region, homeobox.

This sequence belongs to the even-skipped homeobox family.

The protein resides in the nucleus. The sequence is that of Homeobox even-skipped homolog protein 2 (Evx2) from Mus musculus (Mouse).